Reading from the N-terminus, the 297-residue chain is uncharacterized protein (297 aa).

The disordered stretch occupies residues 136 to 174; the sequence is FSETNDDSTDEEIDTPINDDDDDDKNNDADNNDINEDNK. Over residues 139–170 the composition is skewed to acidic residues; it reads TNDDSTDEEIDTPINDDDDDDKNNDADNNDIN.

It to S.pombe SpBC725.03.

This is an uncharacterized protein from Saccharomyces cerevisiae (strain ATCC 204508 / S288c) (Baker's yeast).